The chain runs to 438 residues: Serine/threonine-protein kinase VIK (438 aa).

A disordered region spans residues 1 to 31 (MSSDSPAAGDGGEQAAAGTSVPSPSYDKQKE). ANK repeat units follow at residues 36–65 (SRTS…TLVH), 70–99 (DKRT…DVNA), and 103–133 (WKNT…SYGQ). One can recognise a Protein kinase domain in the interval 162-427 (FSNAAMIGKG…KRLEKIKETL (266 aa)). Residues 168–176 (IGKGSFGEI) and Lys-189 each bind ATP. Asp-285 (proton acceptor) is an active-site residue.

This sequence belongs to the protein kinase superfamily. Ser/Thr protein kinase family. As to quaternary structure, interacts with BRL2. Binds to MSSP1/TMT1 at the tonoplast. Post-translationally, phosphorylated. As to expression, restricted to mature vascular cells. Mostly expressed in mature leaves and seeds, and, to a lower level, in seedlings, young leaves, flowers and siliques.

It is found in the vacuole. The catalysed reaction is L-seryl-[protein] + ATP = O-phospho-L-seryl-[protein] + ADP + H(+). The enzyme catalyses L-threonyl-[protein] + ATP = O-phospho-L-threonyl-[protein] + ADP + H(+). In terms of biological role, serine/threonine protein kinase which may function as an adapter protein for BRL2. Required during vascular development for the establishment of vein pattern in foliar organs. Mediates MSSP1/TMT1 phosphorylation and activation to enhance its carrier activity and consequently vacuolar sugar accumulation, particularly in response to cold. The chain is Serine/threonine-protein kinase VIK from Arabidopsis thaliana (Mouse-ear cress).